The chain runs to 295 residues: Bifunctional protein FolD (295 aa).

Residues 166 to 168, Ser-195, and Ile-236 contribute to the NADP(+) site; that span reads GRS.

This sequence belongs to the tetrahydrofolate dehydrogenase/cyclohydrolase family. Homodimer.

The catalysed reaction is (6R)-5,10-methylene-5,6,7,8-tetrahydrofolate + NADP(+) = (6R)-5,10-methenyltetrahydrofolate + NADPH. It catalyses the reaction (6R)-5,10-methenyltetrahydrofolate + H2O = (6R)-10-formyltetrahydrofolate + H(+). The protein operates within one-carbon metabolism; tetrahydrofolate interconversion. Catalyzes the oxidation of 5,10-methylenetetrahydrofolate to 5,10-methenyltetrahydrofolate and then the hydrolysis of 5,10-methenyltetrahydrofolate to 10-formyltetrahydrofolate. In Chlorobium chlorochromatii (strain CaD3), this protein is Bifunctional protein FolD.